The following is a 120-amino-acid chain: Ribonuclease P protein component (120 aa).

This sequence belongs to the RnpA family. In terms of assembly, consists of a catalytic RNA component (M1 or rnpB) and a protein subunit.

It catalyses the reaction Endonucleolytic cleavage of RNA, removing 5'-extranucleotides from tRNA precursor.. Functionally, RNaseP catalyzes the removal of the 5'-leader sequence from pre-tRNA to produce the mature 5'-terminus. It can also cleave other RNA substrates such as 4.5S RNA. The protein component plays an auxiliary but essential role in vivo by binding to the 5'-leader sequence and broadening the substrate specificity of the ribozyme. The polypeptide is Ribonuclease P protein component (Pseudoalteromonas atlantica (strain T6c / ATCC BAA-1087)).